The sequence spans 58 residues: UPF0391 membrane protein Gbem_0127 (58 aa).

The next 2 membrane-spanning stretches (helical) occupy residues 4-24 and 33-53; these read WALIFFIIAIIAAVFGFGGIA and ILFYLFLVVAVVMLVSALLAG.

This sequence belongs to the UPF0391 family.

The protein localises to the cell membrane. The polypeptide is UPF0391 membrane protein Gbem_0127 (Citrifermentans bemidjiense (strain ATCC BAA-1014 / DSM 16622 / JCM 12645 / Bem) (Geobacter bemidjiensis)).